Reading from the N-terminus, the 314-residue chain is Elongator complex protein 5 (314 aa).

Belongs to the ELP5 family. Component of the elongator complex.

It localises to the cytoplasm. The protein resides in the nucleus. It functions in the pathway tRNA modification; 5-methoxycarbonylmethyl-2-thiouridine-tRNA biosynthesis. Its function is as follows. Component of the elongator complex, a multiprotein complex which is required for multiple tRNA modifications, including mcm5U (5-methoxycarbonylmethyl uridine), mcm5s2U (5-methoxycarbonylmethyl-2-thiouridine), and ncm5U (5-carbamoylmethyl uridine). The elongator complex catalyzes formation of carboxymethyluridine in the wobble base at position 34 in tRNAs. In Schizosaccharomyces pombe (strain 972 / ATCC 24843) (Fission yeast), this protein is Elongator complex protein 5 (iki1).